We begin with the raw amino-acid sequence, 41 residues long: uncharacterized protein (41 aa).

The span at 1–12 (MTRNVVRQEFEA) shows a compositional bias: basic and acidic residues. The tract at residues 1–23 (MTRNVVRQEFEAPGKPQDSSQQD) is disordered.

This is an uncharacterized protein from Homo sapiens (Human).